The primary structure comprises 104 residues: Pterin-4-alpha-carbinolamine dehydratase (104 aa).

Ala2 bears the N-acetylalanine mark. Substrate-binding positions include Asp61–His63 and Ser78–Glu81.

The protein belongs to the pterin-4-alpha-carbinolamine dehydratase family. As to quaternary structure, homotetramer and homodimer. Heterotetramer with HNF1A; formed by a dimer of dimers. Interacts with HNF1B (via HNF-p1 domain); the interaction increases HNF1B transactivation activity.

It localises to the cytoplasm. Its subcellular location is the nucleus. It catalyses the reaction (4aS,6R)-4a-hydroxy-L-erythro-5,6,7,8-tetrahydrobiopterin = (6R)-L-erythro-6,7-dihydrobiopterin + H2O. Functionally, involved in tetrahydrobiopterin biosynthesis. Seems to both prevent the formation of 7-pterins and accelerate the formation of quinonoid-BH2. Coactivator for HNF1A-dependent transcription. Regulates the dimerization of homeodomain protein HNF1A and enhances its transcriptional activity. Also acts as a coactivator for HNF1B-dependent transcription. The protein is Pterin-4-alpha-carbinolamine dehydratase (PCBD1) of Bos taurus (Bovine).